The following is a 239-amino-acid chain: DUP240 protein DFP3 (239 aa).

The Cytoplasmic portion of the chain corresponds to 1-54 (MQPHLDNNSNNDDVKLDTLGEQNVLSSAENITLPEDTFKSYMTYLLYEMAHYKP). A helical transmembrane segment spans residues 55–75 (MIFSFLALSVSILIVVIFHNV). Over 76–79 (KACD) the chain is Extracellular. A helical membrane pass occupies residues 80-104 (VVFGFSIFVTSILFLSTLIPFNVYI). Residues 105–239 (SDEGFRIKLL…RKQYPDADIP (135 aa)) lie on the Cytoplasmic side of the membrane.

It belongs to the DUP/COS family. In terms of assembly, interacts according to large scale protein interaction studies with MEC3 and ULP1.

It localises to the membrane. In Saccharomyces cerevisiae (strain ATCC 204508 / S288c) (Baker's yeast), this protein is DUP240 protein DFP3.